Consider the following 230-residue polypeptide: Cytochrome c oxidase subunit 2 (230 aa).

Over 1-26 (MATPAQLGLMDAASPVMEEMIYFHDH) the chain is Mitochondrial intermembrane. Residues 27 to 48 (VMLVLILITCLIFYSMLVLISS) form a helical membrane-spanning segment. The Mitochondrial matrix segment spans residues 49–62 (KYIYRFLTDGHVIE). A helical transmembrane segment spans residues 63–82 (TVWTVIPAIILVVVALPSLK). The Mitochondrial intermembrane segment spans residues 83–230 (LLYLTDELDN…GWCDMMLDEE (148 aa)). The Cu cation site is built by His-161, Cys-196, Glu-198, Cys-200, His-204, and Met-207. Mg(2+) is bound at residue Glu-198.

Belongs to the cytochrome c oxidase subunit 2 family. Component of the cytochrome c oxidase (complex IV, CIV), a multisubunit enzyme composed of a catalytic core of 3 subunits and several supernumerary subunits. The complex exists as a monomer or a dimer and forms supercomplexes (SCs) in the inner mitochondrial membrane with ubiquinol-cytochrome c oxidoreductase (cytochrome b-c1 complex, complex III, CIII). It depends on Cu cation as a cofactor.

It localises to the mitochondrion inner membrane. It catalyses the reaction 4 Fe(II)-[cytochrome c] + O2 + 8 H(+)(in) = 4 Fe(III)-[cytochrome c] + 2 H2O + 4 H(+)(out). Component of the cytochrome c oxidase, the last enzyme in the mitochondrial electron transport chain which drives oxidative phosphorylation. The respiratory chain contains 3 multisubunit complexes succinate dehydrogenase (complex II, CII), ubiquinol-cytochrome c oxidoreductase (cytochrome b-c1 complex, complex III, CIII) and cytochrome c oxidase (complex IV, CIV), that cooperate to transfer electrons derived from NADH and succinate to molecular oxygen, creating an electrochemical gradient over the inner membrane that drives transmembrane transport and the ATP synthase. Cytochrome c oxidase is the component of the respiratory chain that catalyzes the reduction of oxygen to water. Electrons originating from reduced cytochrome c in the intermembrane space (IMS) are transferred via the dinuclear copper A center (CU(A)) of subunit 2 and heme A of subunit 1 to the active site in subunit 1, a binuclear center (BNC) formed by heme A3 and copper B (CU(B)). The BNC reduces molecular oxygen to 2 water molecules using 4 electrons from cytochrome c in the IMS and 4 protons from the mitochondrial matrix. The chain is Cytochrome c oxidase subunit 2 (COII) from Branchiostoma floridae (Florida lancelet).